The primary structure comprises 512 residues: MNNHYHPTGHRDAKTYAGDRPWPQWPGVPSGLSSSSGLLQNRYYAPAGPFPLLPYFGELGAGPDTAMNQAKRQRAEVSYQQPRPYPTGRGTGSMGYQSKVRVTDKYKVVGFISSGTYGRVYKALGRHGQPGEFAIKKFKPDKEGEQASYTGISQSAVREMALCSELHHPNVIRLVEIILEDKCIFMVFEYAEHDLLQIIHHHTQQPRHPIPPNTIKSIMFQLLNGCQYLHTNWVLHRDLKPANIMVTSSGEVKIGDLGLARLSYKPLHSLYGGDKVVVTIWYRAPELLLGSRHYTPAIDMWALGCIFAELLSLRPIFKGEEAKMDSKKTVPFQRNQMQKIVDIMGLPTKERWPLLTSTTEYSQLSTLQPPIHHGGHHGHHYQSQRQAAAANAGVSHLEKWYYNTINQQTGGSGPGSGTSPLASLGAEGYKLLAGLLEYDPQRRLTAAAALQHPFFSTGDPVSANCFEGLKTEYPHRRVSQDDNDIRTSSLPGTKRSGLPDDSLRPGKRVKEG.

Disordered regions lie at residues 1–22 and 75–94; these read MNNHYHPTGHRDAKTYAGDRPW and AEVSYQQPRPYPTGRGTGSM. Residues 106-455 form the Protein kinase domain; the sequence is YKVVGFISSG…AAAALQHPFF (350 aa). Residues 112–120 and Lys-136 contribute to the ATP site; that span reads ISSGTYGRV. The active-site Proton acceptor is the Asp-238. Disordered regions lie at residues 368-388 and 476-512; these read QPPIHHGGHHGHHYQSQRQAA and RRVSQDDNDIRTSSLPGTKRSGLPDDSLRPGKRVKEG. The span at 373-382 shows a compositional bias: basic residues; that stretch reads HGGHHGHHYQ. Composition is skewed to basic and acidic residues over residues 476 to 485 and 497 to 512; these read RRVSQDDNDI and GLPDDSLRPGKRVKEG.

This sequence belongs to the protein kinase superfamily. CMGC Ser/Thr protein kinase family. CDC2/CDKX subfamily. In terms of assembly, component of the SRB8-11 complex, a regulatory module of the Mediator complex. Mg(2+) serves as cofactor.

Its subcellular location is the nucleus. The catalysed reaction is L-seryl-[protein] + ATP = O-phospho-L-seryl-[protein] + ADP + H(+). The enzyme catalyses L-threonyl-[protein] + ATP = O-phospho-L-threonyl-[protein] + ADP + H(+). It catalyses the reaction [DNA-directed RNA polymerase] + ATP = phospho-[DNA-directed RNA polymerase] + ADP + H(+). Its function is as follows. Component of the SRB8-11 complex. The SRB8-11 complex is a regulatory module of the Mediator complex which is itself involved in regulation of basal and activated RNA polymerase II-dependent transcription. The SRB8-11 complex may be involved in the transcriptional repression of a subset of genes regulated by Mediator. It may inhibit the association of the Mediator complex with RNA polymerase II to form the holoenzyme complex. The SRB8-11 complex phosphorylates the C-terminal domain (CTD) of the largest subunit of RNA polymerase II. This is Serine/threonine-protein kinase SSN3 (SSN3) from Chaetomium globosum (strain ATCC 6205 / CBS 148.51 / DSM 1962 / NBRC 6347 / NRRL 1970) (Soil fungus).